The chain runs to 91 residues: MARSIKKGPYIAHHLLKKIDAINESGSKNTIKTWSRSSTITPEFVGHTLAVHNGNKFIPVFVTENMVGHKLGEFSPTRTFKGHTKKNKNKK.

The protein belongs to the universal ribosomal protein uS19 family.

Its function is as follows. Protein S19 forms a complex with S13 that binds strongly to the 16S ribosomal RNA. The chain is Small ribosomal subunit protein uS19 from Amoebophilus asiaticus (strain 5a2).